The sequence spans 415 residues: uncharacterized protein (415 aa).

4 residues coordinate [4Fe-4S] cluster: cysteine 66, cysteine 72, cysteine 75, and cysteine 149. S-adenosyl-L-methionine is bound by residues glutamine 249, phenylalanine 276, glutamate 296, and aspartate 344. Cysteine 370 acts as the Nucleophile in catalysis.

It belongs to the class I-like SAM-binding methyltransferase superfamily. RNA M5U methyltransferase family.

This is an uncharacterized protein from Brucella melitensis biotype 1 (strain ATCC 23456 / CCUG 17765 / NCTC 10094 / 16M).